Consider the following 390-residue polypeptide: Nucleotide-sugar uncharacterized transporter 1 (390 aa).

Helical transmembrane passes span 61 to 81 (ICGP…IIFM), 89 to 109 (IGFE…YLLM), 128 to 148 (SLLP…LANV), 155 to 175 (VGFY…AEFL), 182 to 201 (SFMK…VATV), 206 to 228 (FSLF…KILW), 249 to 269 (ITLL…ALSF), 278 to 298 (AILV…LALG), 306 to 326 (VVLG…IFGS), and 329 to 349 (GFIS…YTYL). Low complexity predominate over residues 356-365 (LKTSSSSSAL). A disordered region spans residues 356–390 (LKTSSSSSALSEKKSRFSDLKDDDKNLEPYGSEAV). Over residues 366-382 (SEKKSRFSDLKDDDKNL) the composition is skewed to basic and acidic residues.

The protein belongs to the TPT transporter family. TPT (TC 2.A.7.9) subfamily.

The protein resides in the membrane. In Arabidopsis thaliana (Mouse-ear cress), this protein is Nucleotide-sugar uncharacterized transporter 1.